The following is a 388-amino-acid chain: Lipid-A-disaccharide synthase (388 aa).

Belongs to the LpxB family.

The enzyme catalyses a lipid X + a UDP-2-N,3-O-bis[(3R)-3-hydroxyacyl]-alpha-D-glucosamine = a lipid A disaccharide + UDP + H(+). Its pathway is bacterial outer membrane biogenesis; LPS lipid A biosynthesis. In terms of biological role, condensation of UDP-2,3-diacylglucosamine and 2,3-diacylglucosamine-1-phosphate to form lipid A disaccharide, a precursor of lipid A, a phosphorylated glycolipid that anchors the lipopolysaccharide to the outer membrane of the cell. This Burkholderia thailandensis (strain ATCC 700388 / DSM 13276 / CCUG 48851 / CIP 106301 / E264) protein is Lipid-A-disaccharide synthase.